Consider the following 443-residue polypeptide: Serine--tRNA ligase (443 aa).

250–252 lines the L-serine pocket; sequence TSE. 281 to 283 lines the ATP pocket; that stretch reads RSE. Position 304 (glutamate 304) interacts with L-serine. 368 to 371 is an ATP binding site; sequence EISS. Serine 403 is an L-serine binding site.

This sequence belongs to the class-II aminoacyl-tRNA synthetase family. Type-1 seryl-tRNA synthetase subfamily. Homodimer. The tRNA molecule binds across the dimer.

It is found in the cytoplasm. The enzyme catalyses tRNA(Ser) + L-serine + ATP = L-seryl-tRNA(Ser) + AMP + diphosphate + H(+). The catalysed reaction is tRNA(Sec) + L-serine + ATP = L-seryl-tRNA(Sec) + AMP + diphosphate + H(+). Its pathway is aminoacyl-tRNA biosynthesis; selenocysteinyl-tRNA(Sec) biosynthesis; L-seryl-tRNA(Sec) from L-serine and tRNA(Sec): step 1/1. Functionally, catalyzes the attachment of serine to tRNA(Ser). Is also able to aminoacylate tRNA(Sec) with serine, to form the misacylated tRNA L-seryl-tRNA(Sec), which will be further converted into selenocysteinyl-tRNA(Sec). The chain is Serine--tRNA ligase from Variovorax paradoxus (strain S110).